An 89-amino-acid chain; its full sequence is Small ribosomal subunit protein uS14 (89 aa).

Belongs to the universal ribosomal protein uS14 family. In terms of assembly, part of the 30S ribosomal subunit. Contacts proteins S3 and S10.

Its function is as follows. Binds 16S rRNA, required for the assembly of 30S particles and may also be responsible for determining the conformation of the 16S rRNA at the A site. This is Small ribosomal subunit protein uS14 from Akkermansia muciniphila (strain ATCC BAA-835 / DSM 22959 / JCM 33894 / BCRC 81048 / CCUG 64013 / CIP 107961 / Muc).